We begin with the raw amino-acid sequence, 577 residues long: 2-succinyl-5-enolpyruvyl-6-hydroxy-3-cyclohexene-1-carboxylate synthase (577 aa).

The protein belongs to the TPP enzyme family. MenD subfamily. As to quaternary structure, homodimer. Mg(2+) serves as cofactor. Mn(2+) is required as a cofactor. Requires thiamine diphosphate as cofactor.

The enzyme catalyses isochorismate + 2-oxoglutarate + H(+) = 5-enolpyruvoyl-6-hydroxy-2-succinyl-cyclohex-3-ene-1-carboxylate + CO2. The protein operates within quinol/quinone metabolism; 1,4-dihydroxy-2-naphthoate biosynthesis; 1,4-dihydroxy-2-naphthoate from chorismate: step 2/7. Its pathway is quinol/quinone metabolism; menaquinone biosynthesis. Its function is as follows. Catalyzes the thiamine diphosphate-dependent decarboxylation of 2-oxoglutarate and the subsequent addition of the resulting succinic semialdehyde-thiamine pyrophosphate anion to isochorismate to yield 2-succinyl-5-enolpyruvyl-6-hydroxy-3-cyclohexene-1-carboxylate (SEPHCHC). This chain is 2-succinyl-5-enolpyruvyl-6-hydroxy-3-cyclohexene-1-carboxylate synthase, found in Geobacillus kaustophilus (strain HTA426).